Here is a 312-residue protein sequence, read N- to C-terminus: Transcription initiation factor IIB 1 (312 aa).

Residues 12–43 form a TFIIB-type zinc finger; it reads EIERCPECGSTNLIRDYEHGELVCGECGAVIE. Residues Cys-16, Cys-19, Cys-35, and Cys-38 each coordinate Zn(2+). 2 consecutive repeat copies span residues 129-212 and 223-304.

Belongs to the TFIIB family.

Stabilizes TBP binding to an archaeal box-A promoter. Also responsible for recruiting RNA polymerase II to the pre-initiation complex (DNA-TBP-TFIIB). This Thermoplasma volcanium (strain ATCC 51530 / DSM 4299 / JCM 9571 / NBRC 15438 / GSS1) protein is Transcription initiation factor IIB 1.